The following is a 478-amino-acid chain: Cytochrome c-552 (478 aa).

Positions 1-27 (MKKQWTRRSAAAIAMVTTLLLSSHSFA) are cleaved as a signal peptide. His91 contacts heme c. Heme contacts are provided by Cys119, Cys122, and Lys123. Heme c-binding residues include Cys157, Cys160, His161, Cys206, Cys209, and His210. Ca(2+) is bound by residues Glu212, Tyr213, Lys258, and Gln260. Position 213 (Tyr213) interacts with substrate. Position 261 (His261) interacts with substrate. Heme c contacts are provided by His272, Cys279, Cys282, His283, His298, Cys311, Cys314, His315, and His390.

It belongs to the cytochrome c-552 family. Ca(2+) is required as a cofactor. The cofactor is heme c.

The protein localises to the periplasm. It catalyses the reaction 6 Fe(III)-[cytochrome c] + NH4(+) + 2 H2O = 6 Fe(II)-[cytochrome c] + nitrite + 8 H(+). It functions in the pathway nitrogen metabolism; nitrate reduction (assimilation). Its function is as follows. Catalyzes the reduction of nitrite to ammonia, consuming six electrons in the process. This chain is Cytochrome c-552, found in Aliivibrio fischeri (strain ATCC 700601 / ES114) (Vibrio fischeri).